A 531-amino-acid chain; its full sequence is Sterol 26-hydroxylase, mitochondrial (531 aa).

Residues 1–33 (MAALGCARLRWALRGAGRGLCPHGARAKAAIPA) constitute a mitochondrion transit peptide. Residue Lys283 is modified to N6-acetyllysine. Positions 384–398 (PLLKAVLKETLRLYP) are sterol-binding. Cys476 serves as a coordination point for heme. Lys509 and Lys520 each carry N6-acetyllysine.

The protein belongs to the cytochrome P450 family. Interacts with HSP70; this interaction is required for initial targeting to mitochondria. It depends on heme as a cofactor. As to expression, expressed in the neural retina and underlying retinal pigment epithelium (at protein level). Expressed in the gray and white matter of cerebellum (at protein level).

The protein localises to the mitochondrion inner membrane. The catalysed reaction is 5beta-cholestane-3alpha,7alpha,12alpha-triol + 6 reduced [adrenodoxin] + 3 O2 + 5 H(+) = (25R)-3alpha,7alpha,12alpha-trihydroxy-5beta-cholestan-26-oate + 6 oxidized [adrenodoxin] + 4 H2O. The enzyme catalyses cholestanol + 2 reduced [adrenodoxin] + O2 + 2 H(+) = (25R)-26-hydroxycholestanol + 2 oxidized [adrenodoxin] + H2O. It catalyses the reaction (25R)-3beta-hydroxycholest-5-en-7-one-26-al + 2 reduced [adrenodoxin] + O2 + H(+) = (25R)-3beta-hydroxycholest-5-en-7-one-26-oate + 2 oxidized [adrenodoxin] + H2O. It carries out the reaction (25R)-3beta,26-dihydroxycholest-5-en-7-one + 2 reduced [adrenodoxin] + O2 + 2 H(+) = (25R)-3beta-hydroxycholest-5-en-7-one-26-al + 2 oxidized [adrenodoxin] + 2 H2O. The catalysed reaction is 7-oxocholesterol + 2 reduced [adrenodoxin] + O2 + 2 H(+) = (25R)-3beta,26-dihydroxycholest-5-en-7-one + 2 oxidized [adrenodoxin] + H2O. The enzyme catalyses calciol + 2 reduced [adrenodoxin] + O2 + 2 H(+) = calcidiol + 2 oxidized [adrenodoxin] + H2O. It catalyses the reaction (25R)-5beta-cholestane-3alpha,7alpha,12alpha,26-tetrol + 2 reduced [adrenodoxin] + O2 + 2 H(+) = (25R)-3alpha,7alpha,12alpha-trihydroxy-5beta-cholestan-26-al + 2 oxidized [adrenodoxin] + 2 H2O. It carries out the reaction 2 reduced [adrenodoxin] + cholesterol + O2 + 2 H(+) = (25R)-cholest-5-ene-3beta,26-diol + 2 oxidized [adrenodoxin] + H2O. The catalysed reaction is (25R)-3beta,4beta-dihydroxycholest-5-en-26-al + 2 reduced [adrenodoxin] + O2 + H(+) = (25R)-3beta,4beta-dihydroxycholest-5-en-26-oate + 2 oxidized [adrenodoxin] + H2O. The enzyme catalyses (25R)-4beta,26-dihydroxycholesterol + 2 reduced [adrenodoxin] + O2 + 2 H(+) = (25R)-3beta,4beta-dihydroxycholest-5-en-26-al + 2 oxidized [adrenodoxin] + 2 H2O. It catalyses the reaction 4beta-hydroxycholesterol + 2 reduced [adrenodoxin] + O2 + 2 H(+) = (25R)-4beta,26-dihydroxycholesterol + 2 oxidized [adrenodoxin] + H2O. It carries out the reaction (25R)-3beta-hydroxy-5-cholesten-26-al + 2 reduced [adrenodoxin] + O2 + H(+) = (25R)-3beta-hydroxy-5-cholestenoate + 2 oxidized [adrenodoxin] + H2O. The catalysed reaction is (25R)-cholest-5-ene-3beta,26-diol + 2 reduced [adrenodoxin] + O2 + 2 H(+) = (25R)-3beta-hydroxy-5-cholesten-26-al + 2 oxidized [adrenodoxin] + 2 H2O. The enzyme catalyses (25R)-3alpha,7alpha,12alpha-trihydroxy-5beta-cholestan-26-al + 2 reduced [adrenodoxin] + O2 + H(+) = (25R)-3alpha,7alpha,12alpha-trihydroxy-5beta-cholestan-26-oate + 2 oxidized [adrenodoxin] + H2O. It catalyses the reaction 5beta-cholestane-3alpha,7alpha,12alpha-triol + 2 reduced [adrenodoxin] + O2 + 2 H(+) = (25R)-5beta-cholestane-3alpha,7alpha,12alpha,26-tetrol + 2 oxidized [adrenodoxin] + H2O. The protein operates within hormone biosynthesis; cholecalciferol biosynthesis. It functions in the pathway steroid metabolism; cholesterol degradation. It participates in lipid metabolism; bile acid biosynthesis. Cytochrome P450 monooxygenase that catalyzes regio- and stereospecific hydroxylation of cholesterol and its derivatives. Hydroxylates (with R stereochemistry) the terminal methyl group of cholesterol side-chain in a three step reaction to yield at first a C26 alcohol, then a C26 aldehyde and finally a C26 acid. Regulates cholesterol homeostasis by catalyzing the conversion of excess cholesterol to bile acids via both the 'neutral' (classic) and the 'acid' (alternative) pathways. May also regulate cholesterol homeostasis via generation of active oxysterols, which act as ligands for NR1H2 and NR1H3 nuclear receptors, modulating the transcription of genes involved in lipid metabolism. Plays a role in cholestanol metabolism in the cerebellum. Similarly to cholesterol, hydroxylates cholestanol and may facilitate sterol diffusion through the blood-brain barrier to the systemic circulation for further degradation. Also hydroxylates retinal 7-ketocholesterol, a noxious oxysterol with pro-inflammatory and pro-apoptotic effects, and may play a role in its elimination from the retinal pigment epithelium. May play a redundant role in vitamin D biosynthesis. Catalyzes 25-hydroxylation of vitamin D3 that is required for its conversion to a functionally active form. In Homo sapiens (Human), this protein is Sterol 26-hydroxylase, mitochondrial.